The chain runs to 174 residues: Small ribosomal subunit protein uS5 (174 aa).

The 64-residue stretch at 19–82 (LREKMVAINR…DEARRKLKKI (64 aa)) folds into the S5 DRBM domain.

The protein belongs to the universal ribosomal protein uS5 family. In terms of assembly, part of the 30S ribosomal subunit. Contacts proteins S4 and S8.

With S4 and S12 plays an important role in translational accuracy. In terms of biological role, located at the back of the 30S subunit body where it stabilizes the conformation of the head with respect to the body. This is Small ribosomal subunit protein uS5 from Aromatoleum aromaticum (strain DSM 19018 / LMG 30748 / EbN1) (Azoarcus sp. (strain EbN1)).